A 1711-amino-acid polypeptide reads, in one-letter code: Serine/threonine-protein kinase MRCK beta (1711 aa).

In terms of domain architecture, Protein kinase spans 76-342 (FEIIKVIGRG…IEDFKKHAFF (267 aa)). Residues 82 to 90 (IGRGAFGEV) and lysine 105 each bind ATP. Residue aspartate 200 is the Proton acceptor of the active site. Serine 221 and serine 233 each carry phosphoserine; by autocatalysis. The residue at position 239 (threonine 239) is a Phosphothreonine; by autocatalysis. Positions 343-413 (EGLNWENIRN…TTESCFSDRG (71 aa)) constitute an AGC-kinase C-terminal domain. Threonine 423 is subject to Phosphothreonine. 2 coiled-coil regions span residues 431–815 (QRDL…AHWE) and 878–939 (ELQS…FRAD). A disordered region spans residues 461–484 (LQESTQTVQSLHGSSRALSNSNRD). The segment covering 463 to 481 (ESTQTVQSLHGSSRALSNS) has biased composition (polar residues). Arginine 671 carries the omega-N-methylarginine modification. Tyrosine 954 carries the phosphotyrosine modification. Residues 969–1009 (SSASEQETQAPKPEASPSMSVAASEQQEDMARPPQRPSAVP) are disordered. The Phorbol-ester/DAG-type zinc-finger motif lies at 1025–1075 (AHQFSIKSFSSPTQCSHCTSLMVGLIRQGYACEVCSFACHVSCKDGAPQVC). The 120-residue stretch at 1095-1214 (GTAYKGHVKV…WVGILEGLQS (120 aa)) folds into the PH domain. Positions 1240–1513 (IKAILTAAIV…RPLNSEGTLN (274 aa)) constitute a CNH domain. The CRIB domain occupies 1583 to 1596 (ISNPTNFNHVAHMG). Positions 1611 to 1711 (AVPPSQEERP…EGLEQPACDT (101 aa)) are disordered. Over residues 1641–1650 (WPSSGGSEPS) the composition is skewed to polar residues. The segment covering 1664 to 1675 (DFDKEPDSDSTK) has biased composition (basic and acidic residues). Phosphoserine occurs at positions 1680, 1682, 1686, 1690, and 1693.

The protein belongs to the protein kinase superfamily. AGC Ser/Thr protein kinase family. DMPK subfamily. In terms of assembly, homodimer and homotetramer via the coiled coil regions. Interacts tightly with GTP-bound but not GDP-bound CDC42. Interacts with TJP1, when in the presence of catalytically active CDC42. Forms a tripartite complex with MYO18A and LURAP1 with the latter acting as an adapter connecting CDC42BPB and MYO18A. LURAP1 binding results in activation of CDC42BPB by abolition of its negative autoregulation. Interacts with STRIP1, STRN3 and SIKE1. Interacts with CPNE4 (via VWFA domain). Interacts with LURAP1. Interacts (via AGC-kinase C-terminal domain) with FAM89B/LRAP25 (via LRR repeat). Forms a tripartite complex with FAM89B/LRAP25 and LIMK1. The cofactor is Mg(2+). Proteolytically cleaved by caspases upon apoptosis induction. In terms of tissue distribution, expressed in all tissues examined, with high levels in heart, brain, placenta and lung.

The protein resides in the cytoplasm. Its subcellular location is the cell membrane. The protein localises to the cell junction. It localises to the cell projection. It is found in the lamellipodium. It carries out the reaction L-seryl-[protein] + ATP = O-phospho-L-seryl-[protein] + ADP + H(+). It catalyses the reaction L-threonyl-[protein] + ATP = O-phospho-L-threonyl-[protein] + ADP + H(+). With respect to regulation, maintained in an inactive, closed conformation by an interaction between the kinase domain and the negative autoregulatory C-terminal coiled-coil region. Agonist binding to the phorbol ester binding site disrupts this, releasing the kinase domain to allow N-terminus-mediated dimerization and kinase activation by transautophosphorylation. Inhibited by chelerythrine chloride. In terms of biological role, serine/threonine-protein kinase which is an important downstream effector of CDC42 and plays a role in the regulation of cytoskeleton reorganization and cell migration. Regulates actin cytoskeletal reorganization via phosphorylation of PPP1R12C and MYL9/MLC2. In concert with MYO18A and LURAP1, is involved in modulating lamellar actomyosin retrograde flow that is crucial to cell protrusion and migration. Phosphorylates PPP1R12A. In concert with FAM89B/LRAP25 mediates the targeting of LIMK1 to the lamellipodium resulting in its activation and subsequent phosphorylation of CFL1 which is important for lamellipodial F-actin regulation. The chain is Serine/threonine-protein kinase MRCK beta from Homo sapiens (Human).